Here is a 359-residue protein sequence, read N- to C-terminus: Dual-specificity RNA methyltransferase RlmN 1 (359 aa).

The active-site Proton acceptor is glutamate 96. The Radical SAM core domain occupies 102–335 (FKGRATVCIS…STVRQRRGID (234 aa)). A disulfide bridge links cysteine 109 with cysteine 340. [4Fe-4S] cluster contacts are provided by cysteine 116, cysteine 120, and cysteine 123. Residues 166-167 (GE), serine 198, 221-223 (SLH), and asparagine 297 each bind S-adenosyl-L-methionine. Cysteine 340 (S-methylcysteine intermediate) is an active-site residue.

Belongs to the radical SAM superfamily. RlmN family. [4Fe-4S] cluster serves as cofactor.

It localises to the cytoplasm. It carries out the reaction adenosine(2503) in 23S rRNA + 2 reduced [2Fe-2S]-[ferredoxin] + 2 S-adenosyl-L-methionine = 2-methyladenosine(2503) in 23S rRNA + 5'-deoxyadenosine + L-methionine + 2 oxidized [2Fe-2S]-[ferredoxin] + S-adenosyl-L-homocysteine. It catalyses the reaction adenosine(37) in tRNA + 2 reduced [2Fe-2S]-[ferredoxin] + 2 S-adenosyl-L-methionine = 2-methyladenosine(37) in tRNA + 5'-deoxyadenosine + L-methionine + 2 oxidized [2Fe-2S]-[ferredoxin] + S-adenosyl-L-homocysteine. Its function is as follows. Specifically methylates position 2 of adenine 2503 in 23S rRNA and position 2 of adenine 37 in tRNAs. m2A2503 modification seems to play a crucial role in the proofreading step occurring at the peptidyl transferase center and thus would serve to optimize ribosomal fidelity. In Myxococcus xanthus (strain DK1622), this protein is Dual-specificity RNA methyltransferase RlmN 1.